We begin with the raw amino-acid sequence, 459 residues long: Cysteine--tRNA ligase (459 aa).

Position 31 (Cys31) interacts with Zn(2+). The 'HIGH' region signature appears at 33-43 (PTVYDNPHIGN). 3 residues coordinate Zn(2+): Cys216, His241, and Glu245. Residues 274-278 (KMSKS) carry the 'KMSKS' region motif. Residue Lys277 coordinates ATP.

It belongs to the class-I aminoacyl-tRNA synthetase family. Monomer. Requires Zn(2+) as cofactor.

It is found in the cytoplasm. The catalysed reaction is tRNA(Cys) + L-cysteine + ATP = L-cysteinyl-tRNA(Cys) + AMP + diphosphate. In Rickettsia felis (strain ATCC VR-1525 / URRWXCal2) (Rickettsia azadi), this protein is Cysteine--tRNA ligase.